An 87-amino-acid polypeptide reads, in one-letter code: Large ribosomal subunit protein eL20 (87 aa).

It belongs to the eukaryotic ribosomal protein eL20 family. As to quaternary structure, part of the 50S ribosomal subunit. Binds 23S rRNA.

The sequence is that of Large ribosomal subunit protein eL20 from Staphylothermus marinus (strain ATCC 43588 / DSM 3639 / JCM 9404 / F1).